The sequence spans 356 residues: Guanine nucleotide-binding protein alpha-17 subunit (356 aa).

Gly-2 carries the N-myristoyl glycine lipid modification. Residue Cys-4 is the site of S-palmitoyl cysteine attachment. In terms of domain architecture, G-alpha spans 32–356 (SIVKLLLLGA…QKNLQKAGMM (325 aa)). Residues 35 to 48 (KLLLLGAGECGKST) are G1 motif. GTP-binding positions include 40–47 (GAGECGKS), 177–183 (LYSRVAT), 202–206 (DVGGQ), 271–274 (NKKD), and Ala-328. Positions 47 and 183 each coordinate Mg(2+). The G2 motif stretch occupies residues 175-183 (DILYSRVAT). A G3 motif region spans residues 198–207 (FRVFDVGGQR). The G4 motif stretch occupies residues 267 to 274 (ILFMNKKD). Residues 326–331 (TCATDT) are G5 motif.

Belongs to the G-alpha family. In terms of assembly, g proteins are composed of 3 units; alpha, beta and gamma. The alpha chain contains the guanine nucleotide binding site. As to expression, expressed in sensory neurons in the head and tail. Expressed in amphid AWC neurons, to a lesser extent in AWB and weakly in AWA, ASH and ADF neurons (head sensory neurons). Expressed in phasmid PHA and PHB neurons (tail sensory neurons).

Its subcellular location is the cell projection. It is found in the cilium. The protein localises to the dendrite. In terms of biological role, guanine nucleotide-binding proteins (G proteins) are involved as modulators or transducers in various transmembrane signaling systems. This specific G-alpha subunit plays an important role in olfaction and in cilia morphogenesis. Involved in chemotactic responses to attractants diacetyl, pyrazine, 2,4,5-trimethylthiazole, benzaldehyde, isoamyl alcohol, butanone and 2,3-pentanedione. Displays a redundant function with gpa-3 in chemotactic responses. Plays a role in the avoidance response to the noxious chemical quinine in ASH sensory neurons. Involved in avoidance responses to copper, sodium dodecyl sulfate and linoleic acid. Involved in osmotic avoidance and mechanosensory responses. Involved in specifying fan-like morphology of cilia of head sensory neurons AWC. Plays a role in the detection of preferred food sources by mediating the recognition of food odors in olfactory sensory neurons. The polypeptide is Guanine nucleotide-binding protein alpha-17 subunit (Caenorhabditis elegans).